Consider the following 213-residue polypeptide: Probable GTP-binding protein EngB (213 aa).

The EngB-type G domain occupies 30 to 204; sequence EGFEVAFAGR…YTVLAGWMEL (175 aa). Residues 38 to 45, 64 to 68, 82 to 85, 149 to 152, and 182 to 185 contribute to the GTP site; these read GRSNAGKS, GRTQL, DLPG, TKAD, and LFSA. Mg(2+)-binding residues include serine 45 and threonine 66.

The protein belongs to the TRAFAC class TrmE-Era-EngA-EngB-Septin-like GTPase superfamily. EngB GTPase family. Requires Mg(2+) as cofactor.

Necessary for normal cell division and for the maintenance of normal septation. This Pseudomonas fluorescens (strain ATCC BAA-477 / NRRL B-23932 / Pf-5) protein is Probable GTP-binding protein EngB.